We begin with the raw amino-acid sequence, 799 residues long: Lon protease 4 (799 aa).

Residues Phe15 to Ser204 form the Lon N-terminal domain. An ATP-binding site is contributed by Gly356–Thr363. A Lon proteolytic domain is found at Thr595–Glu776. Active-site residues include Ser682 and Lys725.

The protein belongs to the peptidase S16 family. In terms of assembly, homohexamer. Organized in a ring with a central cavity.

It localises to the cytoplasm. The catalysed reaction is Hydrolysis of proteins in presence of ATP.. Its function is as follows. ATP-dependent serine protease that mediates the selective degradation of mutant and abnormal proteins as well as certain short-lived regulatory proteins. Required for cellular homeostasis and for survival from DNA damage and developmental changes induced by stress. Degrades polypeptides processively to yield small peptide fragments that are 5 to 10 amino acids long. Binds to DNA in a double-stranded, site-specific manner. This Sorangium cellulosum (strain So ce56) (Polyangium cellulosum (strain So ce56)) protein is Lon protease 4.